The primary structure comprises 429 residues: GTPase Obg (429 aa).

The 158-residue stretch at 1-158 folds into the Obg domain; it reads MFVDQVKIYV…RNVQLELKVL (158 aa). The segment at 124–145 is disordered; the sequence is RGNKRFATPANPAPELSENGEP. The 171-residue stretch at 159-329 folds into the OBG-type G domain; it reads ADVGLVGFPS…LLLAIADKLE (171 aa). GTP-binding positions include 165-172, 190-194, 212-215, 282-285, and 310-312; these read GFPSVGKS, FTTIV, DLPG, NKMD, and SAV. Positions 172 and 192 each coordinate Mg(2+). The region spanning 351 to 429 is the OCT domain; that stretch reads KYVADEPDFE…LLDYEFEFMD (79 aa).

Belongs to the TRAFAC class OBG-HflX-like GTPase superfamily. OBG GTPase family. In terms of assembly, monomer. Requires Mg(2+) as cofactor.

It is found in the cytoplasm. Its function is as follows. An essential GTPase which binds GTP, GDP and possibly (p)ppGpp with moderate affinity, with high nucleotide exchange rates and a fairly low GTP hydrolysis rate. Plays a role in control of the cell cycle, stress response, ribosome biogenesis and in those bacteria that undergo differentiation, in morphogenesis control. This Listeria monocytogenes serotype 4a (strain HCC23) protein is GTPase Obg.